A 254-amino-acid polypeptide reads, in one-letter code: Protein Thf1 (254 aa).

Residues 182–241 (EEKMKKDLDLYRSNLEKMNQVLEVLEDALAVERQRREKAEAEAKAKTAEATVATETNDEQ) adopt a coiled-coil conformation. Residues 215–228 (QRREKAEAEAKAKT) show a composition bias toward basic and acidic residues. The segment at 215 to 254 (QRREKAEAEAKAKTAEATVATETNDEQDEQKETSESGSDA) is disordered.

The protein belongs to the THF1 family.

Functionally, may be involved in photosynthetic membrane biogenesis. The sequence is that of Protein Thf1 from Picosynechococcus sp. (strain ATCC 27264 / PCC 7002 / PR-6) (Agmenellum quadruplicatum).